The following is a 500-amino-acid chain: Glutelin type-B 4 (500 aa).

A signal peptide spans 1 to 24 (MATIAFSRLSIYFCVLLLCHGSMA). 2 disulfides stabilise this stretch: Cys45–Cys78 and Cys121–Cys310. 2 Cupin type-1 domains span residues 50 to 245 (LQAF…LVAK) and 316 to 465 (LNIE…EQAR). Residues 481–493 (RYQQQTYPGFSNE) show a composition bias toward polar residues. The interval 481 to 500 (RYQQQTYPGFSNESENEALE) is disordered.

This sequence belongs to the 11S seed storage protein (globulins) family. Hexamer; each subunit is composed of an acidic and a basic chain derived from a single precursor and linked by a disulfide bond. Expressed in endosperm (at protein level).

Seed storage protein. The sequence is that of Glutelin type-B 4 (GLUB4) from Oryza sativa subsp. japonica (Rice).